Reading from the N-terminus, the 353-residue chain is tRNA-specific 2-thiouridylase MnmA 2 (353 aa).

Residues 9–16 (AMSGGVDS) and M35 contribute to the ATP site. C98 serves as the catalytic Nucleophile. A disulfide bond links C98 and C194. G122 is an ATP binding site. The segment at 144 to 146 (KDQ) is interaction with tRNA. C194 functions as the Cysteine persulfide intermediate in the catalytic mechanism. The segment at 300–301 (RY) is interaction with tRNA.

It belongs to the MnmA/TRMU family.

It is found in the cytoplasm. The catalysed reaction is S-sulfanyl-L-cysteinyl-[protein] + uridine(34) in tRNA + AH2 + ATP = 2-thiouridine(34) in tRNA + L-cysteinyl-[protein] + A + AMP + diphosphate + H(+). Functionally, catalyzes the 2-thiolation of uridine at the wobble position (U34) of tRNA, leading to the formation of s(2)U34. This Clostridium botulinum (strain Loch Maree / Type A3) protein is tRNA-specific 2-thiouridylase MnmA 2.